A 568-amino-acid polypeptide reads, in one-letter code: Urease subunit alpha (568 aa).

The 439-residue stretch at 130–568 folds into the Urease domain; sequence GGIDSHIHFI…LPMAQRYFLF (439 aa). 3 residues coordinate Ni(2+): histidine 135, histidine 137, and lysine 218. Position 218 is an N6-carboxylysine (lysine 218). Histidine 220 provides a ligand contact to substrate. 2 residues coordinate Ni(2+): histidine 247 and histidine 273. Histidine 321 functions as the Proton donor in the catalytic mechanism. Ni(2+) is bound at residue aspartate 361.

This sequence belongs to the metallo-dependent hydrolases superfamily. Urease alpha subunit family. As to quaternary structure, heterotrimer of UreA (gamma), UreB (beta) and UreC (alpha) subunits. Three heterotrimers associate to form the active enzyme. Requires Ni cation as cofactor. In terms of processing, carboxylation allows a single lysine to coordinate two nickel ions.

The protein localises to the cytoplasm. It catalyses the reaction urea + 2 H2O + H(+) = hydrogencarbonate + 2 NH4(+). It functions in the pathway nitrogen metabolism; urea degradation; CO(2) and NH(3) from urea (urease route): step 1/1. In Nitrosospira multiformis (strain ATCC 25196 / NCIMB 11849 / C 71), this protein is Urease subunit alpha.